The chain runs to 220 residues: Ribose-5-phosphate isomerase A (220 aa).

Substrate is bound by residues 25–28 (TGST), 80–83 (DGAD), and 93–96 (KGGG). E102 (proton acceptor) is an active-site residue. Residue K120 participates in substrate binding.

The protein belongs to the ribose 5-phosphate isomerase family. As to quaternary structure, homodimer.

It catalyses the reaction aldehydo-D-ribose 5-phosphate = D-ribulose 5-phosphate. It functions in the pathway carbohydrate degradation; pentose phosphate pathway; D-ribose 5-phosphate from D-ribulose 5-phosphate (non-oxidative stage): step 1/1. In terms of biological role, catalyzes the reversible conversion of ribose-5-phosphate to ribulose 5-phosphate. The chain is Ribose-5-phosphate isomerase A from Bacillus cereus (strain ATCC 14579 / DSM 31 / CCUG 7414 / JCM 2152 / NBRC 15305 / NCIMB 9373 / NCTC 2599 / NRRL B-3711).